The primary structure comprises 201 residues: Glycerol-3-phosphate acyltransferase (201 aa).

5 consecutive transmembrane segments (helical) span residues 5 to 25, 55 to 75, 88 to 108, 118 to 138, and 164 to 184; these read LLGAVLVAAGYLAGSIPFGVV, KMGVLVLVLDAAKAIVPILLA, WSTAVAVAAFVGHLFPVWLGF, LGIFAVLAPWAALAGLVGYAV, and TYGVRHPVPWAGLAIALLIFL.

Belongs to the PlsY family. As to quaternary structure, probably interacts with PlsX.

It localises to the cell inner membrane. It catalyses the reaction an acyl phosphate + sn-glycerol 3-phosphate = a 1-acyl-sn-glycero-3-phosphate + phosphate. The protein operates within lipid metabolism; phospholipid metabolism. In terms of biological role, catalyzes the transfer of an acyl group from acyl-phosphate (acyl-PO(4)) to glycerol-3-phosphate (G3P) to form lysophosphatidic acid (LPA). This enzyme utilizes acyl-phosphate as fatty acyl donor, but not acyl-CoA or acyl-ACP. The sequence is that of Glycerol-3-phosphate acyltransferase from Anaeromyxobacter dehalogenans (strain 2CP-C).